The following is a 1039-amino-acid chain: Pleckstrin homology domain-containing family G member 5 (1039 aa).

Disordered stretches follow at residues 58-105 and 185-277; these read NVST…RRHT and PGDE…SSES. 2 stretches are compositionally biased toward basic and acidic residues: residues 185–199 and 217–228; these read PGDE…KDSK and ERVDPQSRRESS. The segment covering 259–277 has biased composition (low complexity); it reads SSCSLPVGSSVGSSGSSES. The region spanning 372–564 is the DH domain; the sequence is HQQEAVWELL…ERFIHHVNTC (193 aa). The region spanning 620–720 is the PH domain; that stretch reads QLLLEGSLRM…WVDTLYNAQN (101 aa). 2 disordered regions span residues 739-785 and 800-836; these read QHLQ…ASDG and TLSS…LLPL. Residues 744-757 show a composition bias toward acidic residues; the sequence is LEEEEDEQEEEGEE. Polar residues-rich tracts occupy residues 758-776 and 811-831; these read SGTS…SNSL and FSSQ…TPTS. Threonine 760 carries the phosphothreonine modification. Serine 765 carries the post-translational modification Phosphoserine. Threonine 876 bears the Phosphothreonine mark. Phosphoserine occurs at positions 878, 903, and 908. The disordered stretch occupies residues 967–989; it reads PLSESENRPSHKAGGPADSARRK.

In terms of assembly, interacts with GIPC1/synectin and RHOA. Selectively expressed in cortical and hippocampal neurons with prominent expression in the cell bodies and dendrites. Weakly expressed in rat fad pad ECs (RFPECs).

Its subcellular location is the cytoplasm. The protein resides in the perinuclear region. It localises to the cell membrane. It is found in the cell junction. The protein localises to the cell projection. Its subcellular location is the lamellipodium. In terms of biological role, functions as a guanine exchange factor (GEF) for RAB26 and thus regulates autophagy of synaptic vesicles in axon terminal of motoneurons. Involved in the control of neuronal cell differentiation. Plays a role in angiogenesis through regulation of endothelial cells chemotaxis. Also affects the migration, adhesion, and matrix/bone degradation in macrophages and osteoclasts. In Rattus norvegicus (Rat), this protein is Pleckstrin homology domain-containing family G member 5 (Plekhg5).